The sequence spans 194 residues: Peptidyl-tRNA hydrolase (194 aa).

Tyrosine 17 contacts tRNA. Residue histidine 22 is the Proton acceptor of the active site. Tyrosine 68, asparagine 70, and asparagine 116 together coordinate tRNA.

This sequence belongs to the PTH family. In terms of assembly, monomer.

The protein localises to the cytoplasm. The enzyme catalyses an N-acyl-L-alpha-aminoacyl-tRNA + H2O = an N-acyl-L-amino acid + a tRNA + H(+). Hydrolyzes ribosome-free peptidyl-tRNAs (with 1 or more amino acids incorporated), which drop off the ribosome during protein synthesis, or as a result of ribosome stalling. Its function is as follows. Catalyzes the release of premature peptidyl moieties from peptidyl-tRNA molecules trapped in stalled 50S ribosomal subunits, and thus maintains levels of free tRNAs and 50S ribosomes. The sequence is that of Peptidyl-tRNA hydrolase from Pseudomonas putida (strain ATCC 700007 / DSM 6899 / JCM 31910 / BCRC 17059 / LMG 24140 / F1).